We begin with the raw amino-acid sequence, 175 residues long: MIDDDGYRPNVGIVICNRQGQVLWARRFGQHSWQFPQGGINPGETAEQAMYRELFEEVGLNRKDVRILAATRNWLRYKLPKRLVRWDTKPVCIGQKQKWYLLQLMCNDADINMQTSSTPEFDGWRWVSYWYPVRQVVSFKRDVYRRVMKEFASVVMPLQESTTQRNTPGYRRKRG.

Residues 6–149 (GYRPNVGIVI…KRDVYRRVMK (144 aa)) form the Nudix hydrolase domain. A Nudix box motif is present at residues 38–59 (GGINPGETAEQAMYRELFEEVG).

This sequence belongs to the Nudix hydrolase family. RppH subfamily. A divalent metal cation serves as cofactor.

In terms of biological role, accelerates the degradation of transcripts by removing pyrophosphate from the 5'-end of triphosphorylated RNA, leading to a more labile monophosphorylated state that can stimulate subsequent ribonuclease cleavage. In Erwinia tasmaniensis (strain DSM 17950 / CFBP 7177 / CIP 109463 / NCPPB 4357 / Et1/99), this protein is RNA pyrophosphohydrolase.